The sequence spans 284 residues: 3-methyl-2-oxobutanoate hydroxymethyltransferase (284 aa).

Aspartate 52 and aspartate 91 together coordinate Mg(2+). 3-methyl-2-oxobutanoate-binding positions include 52–53 (DS), aspartate 91, and lysine 121. Glutamate 123 provides a ligand contact to Mg(2+). The Proton acceptor role is filled by glutamate 191.

It belongs to the PanB family. As to quaternary structure, homodecamer; pentamer of dimers. It depends on Mg(2+) as a cofactor.

Its subcellular location is the cytoplasm. It catalyses the reaction 3-methyl-2-oxobutanoate + (6R)-5,10-methylene-5,6,7,8-tetrahydrofolate + H2O = 2-dehydropantoate + (6S)-5,6,7,8-tetrahydrofolate. It functions in the pathway cofactor biosynthesis; (R)-pantothenate biosynthesis; (R)-pantoate from 3-methyl-2-oxobutanoate: step 1/2. Catalyzes the reversible reaction in which hydroxymethyl group from 5,10-methylenetetrahydrofolate is transferred onto alpha-ketoisovalerate to form ketopantoate. The polypeptide is 3-methyl-2-oxobutanoate hydroxymethyltransferase (Deinococcus radiodurans (strain ATCC 13939 / DSM 20539 / JCM 16871 / CCUG 27074 / LMG 4051 / NBRC 15346 / NCIMB 9279 / VKM B-1422 / R1)).